The chain runs to 175 residues: Shikimate kinase (175 aa).

16 to 21 (GAGKST) lines the ATP pocket. A Mg(2+)-binding site is contributed by S20. Substrate is bound by residues D38, R62, and G84. Residue R122 participates in ATP binding. Position 141 (R141) interacts with substrate.

The protein belongs to the shikimate kinase family. Monomer. The cofactor is Mg(2+).

The protein localises to the cytoplasm. The enzyme catalyses shikimate + ATP = 3-phosphoshikimate + ADP + H(+). The protein operates within metabolic intermediate biosynthesis; chorismate biosynthesis; chorismate from D-erythrose 4-phosphate and phosphoenolpyruvate: step 5/7. Functionally, catalyzes the specific phosphorylation of the 3-hydroxyl group of shikimic acid using ATP as a cosubstrate. The protein is Shikimate kinase of Legionella pneumophila (strain Paris).